The primary structure comprises 989 residues: DNA-binding protein SMUBP-2 (989 aa).

Ala2 carries the N-acetylalanine modification. ATP-binding positions include 213 to 220 (GPPGTGKT), Gln402, Tyr441, and Glu570. The interval 637–783 (TAFEYLDDIV…KARHITVSRK (147 aa)) is SS DNA-binding. Disordered regions lie at residues 650-717 (YTHE…GCDR), 765-818 (LRHD…GQPH), and 833-869 (LQRQ…TKGP). Low complexity predominate over residues 677 to 690 (EQENGQEARAAAGQ). An R3H domain is found at 721 to 784 (IDRTEHFRAM…ARHITVSRKS (64 aa)). Residues 765-775 (LRHDSTGEGKA) show a composition bias toward basic and acidic residues. 2 positions are modified to phosphoserine: Ser797 and Ser800. The span at 833–842 (LQRQQGSQAQ) shows a compositional bias: low complexity. The Nuclear localization signal motif lies at 860-864 (KKKKK). The AN1-type zinc-finger motif lies at 885–934 (IKADNTCSFAKCTASTTTLGQFCMHCSRRYCLSHHLPEIHGCGEKARAHA). Cys891, Cys896, Cys907, Cys910, Cys915, His918, His924, and Cys926 together coordinate Zn(2+). Residues 954–972 (ALDPAKRAQLQRRLDKKLG) show a composition bias toward basic and acidic residues. Positions 954-989 (ALDPAKRAQLQRRLDKKLGELSSQRTSKRKEKERGT) are disordered.

Belongs to the DNA2/NAM7 helicase family. As to quaternary structure, homooligomer. Interacts with RUVBL1. Interacts with RUVBL2. Interacts with GTF3C1. Interacts with ABT1. Interacts with ribosomes. High expression in brain and testis, moderate in heart, spleen, and kidney, and low in other tissues.

It is found in the nucleus. Its subcellular location is the cytoplasm. The protein localises to the cell projection. The protein resides in the axon. It carries out the reaction ATP + H2O = ADP + phosphate + H(+). Its function is as follows. 5' to 3' helicase that unwinds RNA and DNA duplexes in an ATP-dependent reaction. Specific to 5'-phosphorylated single-stranded guanine-rich sequences. May play a role in RNA metabolism, ribosome biogenesis or initiation of translation. May play a role in regulation of transcription. Interacts with tRNA-Tyr. The protein is DNA-binding protein SMUBP-2 (IGHMBP2) of Mesocricetus auratus (Golden hamster).